The chain runs to 398 residues: Elongation factor Tu (398 aa).

Residues 10-207 (KPHVNIGTIG…TVDSYIPEPE (198 aa)) form the tr-type G domain. Positions 19–26 (GHVDHGKT) are G1. A GTP-binding site is contributed by 19-26 (GHVDHGKT). Thr26 contacts Mg(2+). Residues 63–67 (GITIN) form a G2 region. The interval 84 to 87 (DAPG) is G3. GTP contacts are provided by residues 84 to 88 (DAPGH) and 139 to 142 (NKVD). Positions 139–142 (NKVD) are G4. The tract at residues 177-179 (SAL) is G5.

It belongs to the TRAFAC class translation factor GTPase superfamily. Classic translation factor GTPase family. EF-Tu/EF-1A subfamily. As to quaternary structure, monomer.

The protein localises to the cytoplasm. The enzyme catalyses GTP + H2O = GDP + phosphate + H(+). In terms of biological role, GTP hydrolase that promotes the GTP-dependent binding of aminoacyl-tRNA to the A-site of ribosomes during protein biosynthesis. This Streptococcus equi subsp. zooepidemicus (strain MGCS10565) protein is Elongation factor Tu.